A 442-amino-acid chain; its full sequence is ATP-dependent protease ATPase subunit HslU (442 aa).

Residues Ile-18, 60 to 65 (GVGKTE), Asp-255, Glu-320, and Arg-392 contribute to the ATP site.

This sequence belongs to the ClpX chaperone family. HslU subfamily. As to quaternary structure, a double ring-shaped homohexamer of HslV is capped on each side by a ring-shaped HslU homohexamer. The assembly of the HslU/HslV complex is dependent on binding of ATP.

The protein resides in the cytoplasm. Functionally, ATPase subunit of a proteasome-like degradation complex; this subunit has chaperone activity. The binding of ATP and its subsequent hydrolysis by HslU are essential for unfolding of protein substrates subsequently hydrolyzed by HslV. HslU recognizes the N-terminal part of its protein substrates and unfolds these before they are guided to HslV for hydrolysis. The sequence is that of ATP-dependent protease ATPase subunit HslU from Shewanella sp. (strain W3-18-1).